Reading from the N-terminus, the 687-residue chain is Glycine--tRNA ligase beta subunit (687 aa).

It belongs to the class-II aminoacyl-tRNA synthetase family. Tetramer of two alpha and two beta subunits.

The protein resides in the cytoplasm. The enzyme catalyses tRNA(Gly) + glycine + ATP = glycyl-tRNA(Gly) + AMP + diphosphate. This is Glycine--tRNA ligase beta subunit from Lactobacillus helveticus (strain DPC 4571).